The primary structure comprises 680 residues: Protein terminal ear1 homolog (680 aa).

Residues 223-295 form the RRM domain; it reads SLVVLNSLPA…RRLVVEYTRP (73 aa). Disordered regions lie at residues 294–415 and 593–680; these read RPSL…SWRG and TEPV…GYTD. Low complexity-rich tracts occupy residues 328 to 340 and 379 to 403; these read PSQSAQPSSSGSG and SAAAACSTAASASSSTATAPSKQSQ. Positions 404 to 413 are enriched in gly residues; sequence KGGGGRGGSW. Low complexity-rich tracts occupy residues 602–621 and 634–648; these read SPAPSSASGASSPPKSCAAS and SSSGDGASSASSSNA. Residues 656 to 666 are compositionally biased toward basic and acidic residues; the sequence is HGETGGDRGDD.

Highly expressed in shoot apex and inflorescence apex, at intermediate levels in roots and at low levels in leaf blade and leaf sheath.

Its function is as follows. Probable RNA-binding protein. Involved in the regular timing (plastochron) of lateral organs formation. May regulate the rate of leaf initiation and the duration of vegetative phase. Seems to be redundant to the function of PLASTOCHRON1, but to act in an independent pathway. The polypeptide is Protein terminal ear1 homolog (PLA2) (Oryza sativa subsp. indica (Rice)).